Consider the following 141-residue polypeptide: MLNQIVVAGAIVRGCTVLVAQRVRPPELAGRWELPGGKVAAGETERAALARELAEELGLEVADLAVGDRVGDDIALNGTTTLRAYRVHLLGGEPRARDHRALCWVTAAELHDVDWVPADRGWIADLARTLNGSAADVHRRC.

The Nudix hydrolase domain maps to 2–131 (LNQIVVAGAI…WIADLARTLN (130 aa)). Mg(2+) contacts are provided by glycine 37, glutamate 52, glutamate 55, and glutamate 56. Positions 37–58 (GKVAAGETERAALARELAEELG) match the Nudix box motif.

This sequence belongs to the Nudix hydrolase family. Mg(2+) serves as cofactor. Mn(2+) is required as a cofactor.

The enzyme catalyses 8-oxo-dGTP + H2O = 8-oxo-dGMP + diphosphate + H(+). May be involved in the GO system responsible for removing an oxidatively damaged form of guanine (7,8-dihydro-8-oxoguanine, 8-oxo-dGTP) from DNA and the nucleotide pool. 8-oxo-dGTP is inserted opposite dA and dC residues of template DNA with almost equal efficiency thus leading to A.T to G.C transversions. MutT specifically degrades 8-oxo-dGTP to the monophosphate. This chain is Putative 8-oxo-dGTP diphosphatase 2 (mutT2), found in Mycobacterium tuberculosis (strain CDC 1551 / Oshkosh).